The following is a 524-amino-acid chain: Cytochrome P450 4F3 (524 aa).

The helical transmembrane segment at 15–35 threads the bilayer; it reads AASPWLLLLLVGASCLLAYIL. Heme is bound at residue cysteine 468.

The protein belongs to the cytochrome P450 family. It depends on heme as a cofactor.

The protein localises to the endoplasmic reticulum membrane. It localises to the microsome membrane. The catalysed reaction is leukotriene B4 + reduced [NADPH--hemoprotein reductase] + O2 = 18-hydroxy-leukotriene B4 + oxidized [NADPH--hemoprotein reductase] + H2O + H(+). It catalyses the reaction leukotriene B4 + reduced [NADPH--hemoprotein reductase] + O2 = 19-hydroxy-leukotriene B4 + oxidized [NADPH--hemoprotein reductase] + H2O + H(+). The protein operates within lipid metabolism; leukotriene B4 degradation. Its function is as follows. A cytochrome P450 monooxygenase involved in the metabolism of the pro-inflammatory lipid mediator leukotriene B4 (LTB4). Hydroxylates at the omega-1 and omega-2 positions LTB4. This oxidation step leads to LTB4 inactivation, which is postulated to be a crucial part of the resolution of inflammation. Mechanistically, uses molecular oxygen inserting one oxygen atom into a substrate, and reducing the second into a water molecule, with two electrons provided by NADPH via cytochrome P450 reductase (CPR; NADPH-ferrihemoprotein reductase). This chain is Cytochrome P450 4F3, found in Rattus norvegicus (Rat).